Here is a 185-residue protein sequence, read N- to C-terminus: Ribosome-recycling factor (185 aa).

This sequence belongs to the RRF family.

Its subcellular location is the cytoplasm. Functionally, responsible for the release of ribosomes from messenger RNA at the termination of protein biosynthesis. May increase the efficiency of translation by recycling ribosomes from one round of translation to another. This Roseiflexus castenholzii (strain DSM 13941 / HLO8) protein is Ribosome-recycling factor.